A 151-amino-acid polypeptide reads, in one-letter code: Transcriptional regulator MraZ (151 aa).

SpoVT-AbrB domains are found at residues 5–51 (AHEL…PVAE) and 81–124 (AEIL…GREQ).

Belongs to the MraZ family. In terms of assembly, forms oligomers.

The protein localises to the cytoplasm. The protein resides in the nucleoid. The sequence is that of Transcriptional regulator MraZ from Neisseria meningitidis serogroup A / serotype 4A (strain DSM 15465 / Z2491).